A 325-amino-acid chain; its full sequence is Acetyl-coenzyme A carboxylase carboxyl transferase subunit alpha (325 aa).

A CoA carboxyltransferase C-terminal domain is found at glutamate 35–glutamine 292.

The protein belongs to the AccA family. As to quaternary structure, acetyl-CoA carboxylase is a heterohexamer composed of biotin carboxyl carrier protein (AccB), biotin carboxylase (AccC) and two subunits each of ACCase subunit alpha (AccA) and ACCase subunit beta (AccD).

It is found in the cytoplasm. It catalyses the reaction N(6)-carboxybiotinyl-L-lysyl-[protein] + acetyl-CoA = N(6)-biotinyl-L-lysyl-[protein] + malonyl-CoA. The protein operates within lipid metabolism; malonyl-CoA biosynthesis; malonyl-CoA from acetyl-CoA: step 1/1. Its function is as follows. Component of the acetyl coenzyme A carboxylase (ACC) complex. First, biotin carboxylase catalyzes the carboxylation of biotin on its carrier protein (BCCP) and then the CO(2) group is transferred by the carboxyltransferase to acetyl-CoA to form malonyl-CoA. This is Acetyl-coenzyme A carboxylase carboxyl transferase subunit alpha from Geobacillus kaustophilus (strain HTA426).